We begin with the raw amino-acid sequence, 202 residues long: HTH-type transcriptional regulator BetI 1 (202 aa).

The HTH tetR-type domain occupies 8 to 68 (PIRRRQLIQA…SAMRQILWDL (61 aa)). Residues 31 to 50 (TIARIAKRAGVSAGIISHYF) constitute a DNA-binding region (H-T-H motif).

Its pathway is amine and polyamine biosynthesis; betaine biosynthesis via choline pathway [regulation]. Repressor involved in the biosynthesis of the osmoprotectant glycine betaine. It represses transcription of the choline transporter BetT and the genes of BetAB involved in the synthesis of glycine betaine. In Chromohalobacter salexigens (strain ATCC BAA-138 / DSM 3043 / CIP 106854 / NCIMB 13768 / 1H11), this protein is HTH-type transcriptional regulator BetI 1.